The sequence spans 89 residues: Small ribosomal subunit protein uS15 (89 aa).

This sequence belongs to the universal ribosomal protein uS15 family. In terms of assembly, part of the 30S ribosomal subunit. Forms a bridge to the 50S subunit in the 70S ribosome, contacting the 23S rRNA.

Its function is as follows. One of the primary rRNA binding proteins, it binds directly to 16S rRNA where it helps nucleate assembly of the platform of the 30S subunit by binding and bridging several RNA helices of the 16S rRNA. Forms an intersubunit bridge (bridge B4) with the 23S rRNA of the 50S subunit in the ribosome. This Azobacteroides pseudotrichonymphae genomovar. CFP2 protein is Small ribosomal subunit protein uS15.